A 157-amino-acid polypeptide reads, in one-letter code: UPF0262 protein Avi_0642 (157 aa).

It belongs to the UPF0262 family.

This Allorhizobium ampelinum (strain ATCC BAA-846 / DSM 112012 / S4) (Agrobacterium vitis (strain S4)) protein is UPF0262 protein Avi_0642.